Reading from the N-terminus, the 221-residue chain is Extracellular superoxide dismutase [Cu-Zn] (221 aa).

The N-terminal stretch at 1 to 19 (MKTRVVLILALSVCIEAAS) is a signal peptide. Asparagine 56 is a glycosylation site (N-linked (GlcNAc...) asparagine). Positions 70, 72, and 87 each coordinate Cu cation. An intrachain disulfide couples cysteine 81 to cysteine 170. Zn(2+) contacts are provided by histidine 87, histidine 95, histidine 104, and aspartate 107. Residue histidine 144 coordinates Cu cation.

This sequence belongs to the Cu-Zn superoxide dismutase family. Requires Cu cation as cofactor. Zn(2+) serves as cofactor. Isoform 2 is preferentially expressed in eggs.

It localises to the secreted. It is found in the extracellular space. The protein resides in the membrane. It catalyses the reaction 2 superoxide + 2 H(+) = H2O2 + O2. Protects cells against oxidative stress by converting superoxide radicals to hydrogen peroxide. Oxidative stress is involved in various biological dysfunctions and senescence. This Caenorhabditis elegans protein is Extracellular superoxide dismutase [Cu-Zn] (sod-4).